Consider the following 203-residue polypeptide: Sec-independent protein translocase protein TatB (203 aa).

Residues 1–21 (MFDIGWTELLVIAVVLIVVVG) form a helical membrane-spanning segment. Positions 179–203 (KPKRTTAVRKPATLKKPAQTKKDEA) are disordered.

This sequence belongs to the TatB family. In terms of assembly, the Tat system comprises two distinct complexes: a TatABC complex, containing multiple copies of TatA, TatB and TatC subunits, and a separate TatA complex, containing only TatA subunits. Substrates initially bind to the TatABC complex, which probably triggers association of the separate TatA complex to form the active translocon.

It localises to the cell inner membrane. Part of the twin-arginine translocation (Tat) system that transports large folded proteins containing a characteristic twin-arginine motif in their signal peptide across membranes. Together with TatC, TatB is part of a receptor directly interacting with Tat signal peptides. TatB may form an oligomeric binding site that transiently accommodates folded Tat precursor proteins before their translocation. The polypeptide is Sec-independent protein translocase protein TatB (Rhizobium johnstonii (strain DSM 114642 / LMG 32736 / 3841) (Rhizobium leguminosarum bv. viciae)).